Here is a 309-residue protein sequence, read N- to C-terminus: uncharacterized protein (309 aa).

Residues 23–39 (RFNVAIIGGTGGLGRAI) form a helical membrane-spanning segment.

The protein belongs to the NmrA-type oxidoreductase family.

Its subcellular location is the membrane. This is an uncharacterized protein from Saccharomyces cerevisiae (strain ATCC 204508 / S288c) (Baker's yeast).